The chain runs to 268 residues: Hemin import ATP-binding protein HmuV (268 aa).

The region spanning 5-241 (LKAEAASFAL…ELIADVFDVA (237 aa)) is the ABC transporter domain. 37–44 (GPNGAGKS) provides a ligand contact to ATP.

This sequence belongs to the ABC transporter superfamily. Heme (hemin) importer (TC 3.A.1.14.5) family. The complex is composed of two ATP-binding proteins (HmuV), two transmembrane proteins (HmuU) and a solute-binding protein (HmuT).

It is found in the cell inner membrane. Part of the ABC transporter complex HmuTUV involved in hemin import. Responsible for energy coupling to the transport system. In Rhodopseudomonas palustris (strain ATCC BAA-98 / CGA009), this protein is Hemin import ATP-binding protein HmuV.